The following is a 199-amino-acid chain: Recombination protein RecR (199 aa).

Residues 57–72 form a C4-type zinc finger; that stretch reads CSVCGNLTDDDPCNIC. One can recognise a Toprim domain in the interval 80–176; the sequence is STVLVVEDSK…TVTRLARGLA (97 aa).

Belongs to the RecR family.

In terms of biological role, may play a role in DNA repair. It seems to be involved in an RecBC-independent recombinational process of DNA repair. It may act with RecF and RecO. The sequence is that of Recombination protein RecR from Streptococcus mutans serotype c (strain ATCC 700610 / UA159).